We begin with the raw amino-acid sequence, 709 residues long: Polyribonucleotide nucleotidyltransferase (709 aa).

Mg(2+)-binding residues include Asp-487 and Asp-493. Residues 554 to 613 form the KH domain; the sequence is PRIHTMKISVEKIKDVIGKGGAVIRQLTEETGTTIEIEDDGTIKIAATDGDQAKEAIRRI. The 69-residue stretch at 623 to 691 folds into the S1 motif domain; the sequence is GVIYTGKVAR…RQGRVRLSMK (69 aa).

The protein belongs to the polyribonucleotide nucleotidyltransferase family. In terms of assembly, component of the RNA degradosome, which is a multiprotein complex involved in RNA processing and mRNA degradation. Mg(2+) serves as cofactor.

Its subcellular location is the cytoplasm. It catalyses the reaction RNA(n+1) + phosphate = RNA(n) + a ribonucleoside 5'-diphosphate. Its function is as follows. Involved in mRNA degradation. Catalyzes the phosphorolysis of single-stranded polyribonucleotides processively in the 3'- to 5'-direction. This is Polyribonucleotide nucleotidyltransferase from Vibrio cholerae serotype O1 (strain ATCC 39315 / El Tor Inaba N16961).